The chain runs to 215 residues: Chaperone protein TorD (215 aa).

It belongs to the TorD/DmsD family. TorD subfamily.

Its subcellular location is the cytoplasm. Its function is as follows. Involved in the biogenesis of TorA. Acts on TorA before the insertion of the molybdenum cofactor and, as a result, probably favors a conformation of the apoenzyme that is competent for acquiring the cofactor. This Vibrio vulnificus (strain CMCP6) protein is Chaperone protein TorD.